A 98-amino-acid chain; its full sequence is MTKSELIERIAERQDQLSAKDIELAVKLVLEYMSQALSTGERIEIRGFGSFSLHFRAPRTGRNPKTGESVTLPGKYVPHFKPGKEMRDRVNESIQSEG.

The tract at residues 59–98 (RTGRNPKTGESVTLPGKYVPHFKPGKEMRDRVNESIQSEG) is disordered. Residues 82–91 (PGKEMRDRVN) show a composition bias toward basic and acidic residues.

The protein belongs to the bacterial histone-like protein family. In terms of assembly, heterodimer of an alpha and a beta chain.

Functionally, this protein is one of the two subunits of integration host factor, a specific DNA-binding protein that functions in genetic recombination as well as in transcriptional and translational control. The chain is Integration host factor subunit beta from Saccharophagus degradans (strain 2-40 / ATCC 43961 / DSM 17024).